The following is a 506-amino-acid chain: Maturase K (506 aa).

It belongs to the intron maturase 2 family. MatK subfamily.

The protein resides in the plastid. It is found in the chloroplast. Its function is as follows. Usually encoded in the trnK tRNA gene intron. Probably assists in splicing its own and other chloroplast group II introns. The sequence is that of Maturase K from Prunus persica (Peach).